Consider the following 161-residue polypeptide: Allophycocyanin alpha chain (161 aa).

Residue Asn-71 is modified to N4-methylasparagine. (2R,3E)-phycocyanobilin is bound at residue Cys-81.

The protein belongs to the phycobiliprotein family. As to quaternary structure, heterodimer of an alpha and a beta chain. Post-translationally, contains one covalently linked phycocyanobilin chromophore.

It localises to the plastid. The protein resides in the chloroplast thylakoid membrane. Light-harvesting photosynthetic bile pigment-protein from the phycobiliprotein complex. Allophycocyanin has a maximum absorption at approximately 650 nanometers. This chain is Allophycocyanin alpha chain (apcA), found in Galdieria sulphuraria (Red alga).